We begin with the raw amino-acid sequence, 422 residues long: Biofilm regulator 1 (422 aa).

Low complexity-rich tracts occupy residues 1-19 and 36-45; these read MSSSSSLSSSTTTATTTSA and SGGSNNGNGS. Disordered regions lie at residues 1–86 and 116–207; these read MSSS…KCPP and RLSS…PSHP. Polar residues predominate over residues 46–61; that stretch reads ALKSQISPRLSDTSRI. Composition is skewed to low complexity over residues 69-81 and 120-143; these read TSGSSTPTSSSTP and PTLPVKVQPQQQPQLPPASSLSPV. Positions 146-159 are enriched in polar residues; the sequence is VINTPPQQPQSVSA. Over residues 160 to 194 the composition is skewed to low complexity; the sequence is STSPNTQYQYYQYQQQSSPIQQQQQQQQATPAATP. Polar residues predominate over residues 195–205; that stretch reads TVMQMAQNQPS. The GATA-type zinc finger occupies 282–307; the sequence is CHRCGTTETPEWRRGPKGVRTLCNAC.

As to quaternary structure, interacts with HDA1.

It localises to the nucleus. Functionally, transcription factor required for hyphal growth, biofilm formation, and virulence. Promotes formation of both conventional and pheromone-stimulated biofilms. Binds and recruits HDA1 to promoters of hypha-specific genes in a rapamycin-dependent manner. Involved in the switch between two heritable states, the white and opaque states. These two cell types differ in many characteristics, including cell structure, mating competence, and virulence. Each state is heritable for many generations, and switching between states occurs stochastically at low frequency. The sequence is that of Biofilm regulator 1 (BRG1) from Candida albicans (strain SC5314 / ATCC MYA-2876) (Yeast).